A 196-amino-acid polypeptide reads, in one-letter code: Flagellin B2 (196 aa).

Positions Met1 to Gly12 are excised as a propeptide.

It belongs to the archaeal flagellin family. Post-translationally, glycosylated.

It localises to the archaeal flagellum. Flagellin is the subunit protein which polymerizes to form the filaments of archaeal flagella. In Halobacterium salinarum (strain ATCC 700922 / JCM 11081 / NRC-1) (Halobacterium halobium), this protein is Flagellin B2 (flaB2).